The sequence spans 51 residues: Large ribosomal subunit protein eL39 (51 aa).

It belongs to the eukaryotic ribosomal protein eL39 family.

The sequence is that of Large ribosomal subunit protein eL39 from Methanobrevibacter smithii (strain ATCC 35061 / DSM 861 / OCM 144 / PS).